A 259-amino-acid chain; its full sequence is DNA-directed RNA polymerase 30 kDa polypeptide (259 aa).

The TFIIS-type zinc-finger motif lies at 155–195 (YNTPCPNCKSRNTTPMMIQTRAADEPPLVRHACRDCKQHFK). Zn(2+) is bound by residues cysteine 159, cysteine 162, cysteine 187, and cysteine 190. The tract at residues 214–259 (ENKEITEILPDNNPSPPESPEPASPIDDGLIRSTFDRNDEPPEDDE) is disordered. The segment covering 226–236 (NPSPPESPEPA) has biased composition (pro residues).

The protein belongs to the poxviridae DNA-directed RNA polymerase 30 kDa subunit family. The DNA-dependent RNA polymerase (vRNAP) consists of eight subunits encoded by early viral genes and termed according to their apparent molecular masses Rpo147, Rpo132, Rpo35, Rpo30, Rpo22, Rpo19, Rpo18, and Rpo7. The same holoenzyme, with the addition of the transcription-specificity factor RAP94, is used for early gene expression.

Its subcellular location is the virion. The protein localises to the host cytoplasm. The enzyme catalyses RNA(n) + a ribonucleoside 5'-triphosphate = RNA(n+1) + diphosphate. In terms of biological role, part of the DNA-dependent RNA polymerase which catalyzes the transcription of viral DNA into RNA using the four ribonucleoside triphosphates as substrates. Responsible for the transcription of early, intermediate and late genes. DNA-dependent RNA polymerase associates with the early transcription factor (ETF), itself composed of OPG118/D6 and OPG134/A8, thereby allowing the early genes transcription. Late transcription, and probably also intermediate transcription, require newly synthesized RNA polymerase. The sequence is that of DNA-directed RNA polymerase 30 kDa polypeptide (OPG066) from Homo sapiens (Human).